The sequence spans 142 residues: MSSGAGSGTTKGGRGKPKATKSVSRSSKAGLQFPVGRIARFLKAGKYAERVGAGAPVYLSAVLEYLAAEVLELAGNAARDNKKTRIVPRHIQLAVRNDEELSKLLGSVTIANGGVLPNIHQTLLPSKVGKNKGDIGSASQEF.

Positions 1-12 are enriched in gly residues; the sequence is MSSGAGSGTTKG. Residues 1-28 are disordered; it reads MSSGAGSGTTKGGRGKPKATKSVSRSSK. Phosphoserine; by ATM and ATR is present on Ser-139. The [ST]-Q motif signature appears at 139–140; it reads SQ.

Belongs to the histone H2A family. The nucleosome is a histone octamer containing two molecules each of H2A, H2B, H3 and H4 assembled in one H3-H4 heterotetramer and two H2A-H2B heterodimers. The octamer wraps approximately 147 bp of DNA. Interacts with numerous proteins required for DNA damage signaling and repair when phosphorylated on Ser-139. Post-translationally, phosphorylated to form H2AXS139ph (gamma-H2AX) in response to DNA double strand breaks (DSBs) generated by exogenous genotoxic agents and by stalled replication forks, and may also occur during meiotic recombination events. Phosphorylation can extend up to several thousand nucleosomes from the actual site of the DSB and may mark the surrounding chromatin for recruitment of proteins required for DNA damage signaling and repair. Widespread phosphorylation may also serve to amplify the damage signal or aid repair of persistent lesions. H2AXS139ph in response to ionizing radiation is mediated by ATM while defects in DNA replication induce H2AXS139ph subsequent to activation of ATR. Dephosphorylation of H2AXS139ph by PP2A is required for DNA DSB repair. Expressed in meristems and dividing cells.

It localises to the nucleus. The protein localises to the chromosome. Variant histone H2A which replaces conventional H2A in a subset of nucleosomes. Nucleosomes wrap and compact DNA into chromatin, limiting DNA accessibility to the cellular machineries which require DNA as a template. Histones thereby play a central role in transcription regulation, DNA repair, DNA replication and chromosomal stability. DNA accessibility is regulated via a complex set of post-translational modifications of histones, also called histone code, and nucleosome remodeling. Required for checkpoint-mediated arrest of cell cycle progression in response to low doses of ionizing radiation and for efficient repair of DNA double strand breaks (DSBs) specifically when modified by C-terminal phosphorylation. This chain is Probable histone H2AXb, found in Arabidopsis thaliana (Mouse-ear cress).